We begin with the raw amino-acid sequence, 104 residues long: T-complex protein 1 subunit zeta (104 aa).

Gly24 provides a ligand contact to ADP. Gly24 contacts ATP. Residue Asp75 coordinates Mg(2+). ADP contacts are provided by Gly76, Thr78, and Ser79. 2 residues coordinate ATP: Gly76 and Thr78.

This sequence belongs to the TCP-1 chaperonin family. In terms of assembly, component of the chaperonin-containing T-complex (TRiC), a hexadecamer composed of two identical back-to-back stacked rings enclosing a protein folding chamber. Each ring is made up of eight different subunits: TCP1/CCT1, CCT2, CCT3, CCT4, CCT5, CCT6A/CCT6, CCT7, CCT8. Interacts with PACRG.

The protein resides in the cytoplasm. The catalysed reaction is ATP + H2O = ADP + phosphate + H(+). Functionally, component of the chaperonin-containing T-complex (TRiC), a molecular chaperone complex that assists the folding of actin, tubulin and other proteins upon ATP hydrolysis. The TRiC complex mediates the folding of WRAP53/TCAB1, thereby regulating telomere maintenance. The protein is T-complex protein 1 subunit zeta (CCT6) of Sus scrofa (Pig).